Here is a 141-residue protein sequence, read N- to C-terminus: ATP synthase epsilon chain (141 aa).

The protein belongs to the ATPase epsilon chain family. F-type ATPases have 2 components, CF(1) - the catalytic core - and CF(0) - the membrane proton channel. CF(1) has five subunits: alpha(3), beta(3), gamma(1), delta(1), epsilon(1). CF(0) has three main subunits: a, b and c.

Its subcellular location is the cell membrane. Its function is as follows. Produces ATP from ADP in the presence of a proton gradient across the membrane. In Natranaerobius thermophilus (strain ATCC BAA-1301 / DSM 18059 / JW/NM-WN-LF), this protein is ATP synthase epsilon chain.